We begin with the raw amino-acid sequence, 372 residues long: Methylthioribose-1-phosphate isomerase 1 (372 aa).

The active-site Proton donor is the Asp-254.

This sequence belongs to the eIF-2B alpha/beta/delta subunits family. MtnA subfamily.

The protein resides in the cytoplasm. It is found in the nucleus. It carries out the reaction 5-(methylsulfanyl)-alpha-D-ribose 1-phosphate = 5-(methylsulfanyl)-D-ribulose 1-phosphate. The protein operates within amino-acid biosynthesis; L-methionine biosynthesis via salvage pathway; L-methionine from S-methyl-5-thio-alpha-D-ribose 1-phosphate: step 1/6. In terms of biological role, catalyzes the interconversion of methylthioribose-1-phosphate (MTR-1-P) into methylthioribulose-1-phosphate (MTRu-1-P). This Trypanosoma cruzi (strain CL Brener) protein is Methylthioribose-1-phosphate isomerase 1.